The primary structure comprises 207 residues: Recombination protein RecR (207 aa).

Residues 60–75 (CRHCHNISDSDVCTIC) form a C4-type zinc finger. The Toprim domain occupies 83-178 (STLCVVENIR…RVSVIARGIA (96 aa)).

It belongs to the RecR family.

In terms of biological role, may play a role in DNA repair. It seems to be involved in an RecBC-independent recombinational process of DNA repair. It may act with RecF and RecO. The chain is Recombination protein RecR from Porphyromonas gingivalis (strain ATCC BAA-308 / W83).